The primary structure comprises 59 residues: uncharacterized protein (59 aa).

The N-terminal stretch at 1-21 (MYLFYVLLSSLFLSALIYVIG) is a signal peptide. Topologically, residues 22 to 24 (KSH) are extracellular. Residues 25–45 (PNLFMFISLFVNVVTILYLVF) traverse the membrane as a helical segment. Topologically, residues 46 to 59 (KDYGQYIIAKPINT) are cytoplasmic.

Its subcellular location is the host membrane. This is an uncharacterized protein from Acidianus convivator (ABV).